The following is a 351-amino-acid chain: Pinopsin (351 aa).

The Extracellular portion of the chain corresponds to 1-30; sequence MSSNSSQAPPNGTPGPFDGPQWPYQAPQST. N-linked (GlcNAc...) asparagine glycosylation occurs at N4. A helical membrane pass occupies residues 31–55; that stretch reads YVGVAVLMGTVVACASVVNGLVIVV. Topologically, residues 56–67 are cytoplasmic; it reads SICYKKLRSPLN. A helical membrane pass occupies residues 68–92; that stretch reads YILVNLAVADLLVTLCGSSVSLSNN. Residues 93-107 are Extracellular-facing; it reads INGFFVFGRRMCELE. A disulfide bond links C104 and C181. The helical transmembrane segment at 108–127 threads the bilayer; that stretch reads GFMVSLTGIVGLWSLAILAL. Residues 128–146 lie on the Cytoplasmic side of the membrane; the sequence is ERYVVVCKPLGDFQFQRRH. The helical transmembrane segment at 147–170 threads the bilayer; that stretch reads AVSGCAFTWGWALLWSAPPLLGWS. The Extracellular portion of the chain corresponds to 171–194; that stretch reads SYVPEGLRTSCGPNWYTGGSNNNS. N-linked (GlcNAc...) asparagine glycosylation is present at N192. The chain crosses the membrane as a helical span at residues 195-222; it reads YILSLFVTCFVLPLSLILFSYTNLLLTL. The Cytoplasmic segment spans residues 223-244; the sequence is RAAAAQQKEADTTQRAEREVTR. The helical transmembrane segment at 245 to 268 threads the bilayer; sequence MVIVMVMAFLLCWLPYSTFALVVA. The Extracellular portion of the chain corresponds to 269–276; it reads THKGIIIQ. Residues 277 to 301 form a helical membrane-spanning segment; that stretch reads PVLASLPSYFSKTATVYNPIIYVFM. The residue at position 288 (K288) is an N6-(retinylidene)lysine. Residues 302-351 lie on the Cytoplasmic side of the membrane; the sequence is NKQFQSCLLEMLCCGYQPQRTGKASPGTPGPHADVTAAGLRNKVMPAHPV. S-palmitoyl cysteine attachment occurs at residues C314 and C315.

The protein belongs to the G-protein coupled receptor 1 family. Opsin subfamily. Post-translationally, phosphorylated on some or all of the serine and threonine residues present in the C-terminal region. Pineal gland.

It localises to the membrane. Produces a slow and prolonged phototransduction response consistent with the non-visual function of pineal photoreception. This Gallus gallus (Chicken) protein is Pinopsin.